Consider the following 401-residue polypeptide: Lipid-A-disaccharide synthase (401 aa).

The protein belongs to the LpxB family.

The enzyme catalyses a lipid X + a UDP-2-N,3-O-bis[(3R)-3-hydroxyacyl]-alpha-D-glucosamine = a lipid A disaccharide + UDP + H(+). It functions in the pathway bacterial outer membrane biogenesis; LPS lipid A biosynthesis. Its function is as follows. Condensation of UDP-2,3-diacylglucosamine and 2,3-diacylglucosamine-1-phosphate to form lipid A disaccharide, a precursor of lipid A, a phosphorylated glycolipid that anchors the lipopolysaccharide to the outer membrane of the cell. The sequence is that of Lipid-A-disaccharide synthase from Ruegeria pomeroyi (strain ATCC 700808 / DSM 15171 / DSS-3) (Silicibacter pomeroyi).